The chain runs to 157 residues: Eukaryotic translation initiation factor 5A-2 (157 aa).

Serine 2 carries the post-translational modification N-acetylserine. Serine 2 is modified (phosphoserine). A Phosphothreonine modification is found at threonine 7. Residue lysine 51 is modified to Hypusine. A Phosphoserine modification is found at serine 74. Lysine 86 participates in a covalent cross-link: Glycyl lysine isopeptide (Lys-Gly) (interchain with G-Cter in ubiquitin).

This sequence belongs to the eIF-5A family. In terms of assembly, homodimer. Binds to 80S ribosomes. Actively translating ribosomes show mutually exclusive binding of eIF5a (HYP2 or ANB1) and EFT1/eEF2. Interacts with DYS1 and LIA1. Post-translationally, lys-51 undergoes hypusination, a unique post-translational modification that consists in the addition of a butylamino group from spermidine to lysine side chain, leading to the formation of the unusual amino acid hypusine. eIF-5As are the only known proteins to undergo this modification, which is essential for their function.

The protein resides in the cytoplasm. In terms of biological role, translation factor that promotes translation elongation and termination, particularly upon ribosome stalling at specific amino acid sequence contexts. Binds between the exit (E) and peptidyl (P) site of the ribosome and promotes rescue of stalled ribosome: specifically required for efficient translation of polyproline-containing peptides as well as other motifs that stall the ribosome. Acts as ribosome quality control (RQC) cofactor by joining the RQC complex to facilitate peptidyl transfer during CAT tailing step. Involved in actin dynamics and cell cycle progression, mRNA decay and probably in a pathway involved in stress response and maintenance of cell wall integrity. The sequence is that of Eukaryotic translation initiation factor 5A-2 (ANB1) from Saccharomyces cerevisiae (strain ATCC 204508 / S288c) (Baker's yeast).